Consider the following 617-residue polypeptide: Thioredoxin reductase (617 aa).

FAD contacts are provided by residues 127–128 (PG), 147–150 (DYVK), 163–164 (TC), 168–172 (GCVPK), A237, D433, and 440–442 (ELA). C164 and C169 form a disulfide bridge. Residues 514–528 (HRQKHIRAQKDEYDL) form a loop important for the interaction with TRX1 region. Position 585 (H585) interacts with FAD. H585 acts as the Proton acceptor in catalysis. Residues C611 and C616 are joined by a disulfide bond.

The protein belongs to the class-I pyridine nucleotide-disulfide oxidoreductase family. In terms of assembly, homodimer. Requires FAD as cofactor.

Its subcellular location is the mitochondrion. The protein localises to the cytoplasm. It catalyses the reaction [thioredoxin]-dithiol + NADP(+) = [thioredoxin]-disulfide + NADPH + H(+). In terms of biological role, catalyzes the transfer of electrons from NADPH to thioredoxins TRX1, TRX2 and TRX3, which in turn act as reductants of disulfide containing proteins. Able to reduce nitroglutathione (GSNO), a compound involved in the transport of nitric oxide (NO); however, TRX1 is more efficient in reducing GSNO. Has no catalytic activity towards oxidized glutathione (GSSG). This chain is Thioredoxin reductase, found in Plasmodium falciparum (isolate 3D7).